Here is a 470-residue protein sequence, read N- to C-terminus: Properdin (470 aa).

A signal peptide spans 1–26; that stretch reads MTAPVQVPQSLLLLLMLLLTLPATGS. 7 consecutive TSP type-1 domains span residues 27–75, 76–133, 135–190, 192–254, 256–312, 314–376, and 380–463; these read DPVL…QACR, SPRW…QCCP, MGGW…QVCP, HGAW…PPCP, AGGW…VPCP, DGEW…QNCI, and KGSW…PACK. 3 cysteine pairs are disulfide-bonded: Cys31–Cys55, Cys42–Cys71, and Cys56–Cys74. C-linked (Man) tryptophan glycans are attached at residues Trp82 and Trp85. Disulfide bonds link Cys88–Cys126, Cys92–Cys132, Cys103–Cys110, Cys131–Cys169, Cys147–Cys183, Cys151–Cys189, and Cys162–Cys173. C-linked (Man) tryptophan glycans are attached at residues Trp138, Trp141, and Trp144. O-linked (Fuc...) threonine glycosylation is present at Thr150. C-linked (Man) tryptophan glycosylation is found at Trp195, Trp198, and Trp201. 3 disulfides stabilise this stretch: Cys204/Cys247, Cys208/Cys253, and Cys223/Cys237. O-linked (Fuc...) serine glycosylation occurs at Ser207. C-linked (Man) tryptophan glycosylation is found at Trp259 and Trp262. Intrachain disulfides connect Cys268–Cys305, Cys272–Cys311, and Cys283–Cys295. Thr271 is a glycosylation site (O-linked (Fuc...) threonine). Residues Trp320 and Trp323 are each glycosylated (C-linked (Man) tryptophan). 3 disulfide bridges follow: Cys326-Cys369, Cys336-Cys375, and Cys349-Cys359. Positions 350 to 358 are interaction with Complement C3 beta chain; it reads KGRKFNGQR. Residues Trp383, Trp386, and Trp389 are each glycosylated (C-linked (Man) tryptophan). Intrachain disulfides connect Cys392–Cys456, Cys396–Cys462, and Cys408–Cys440. The N-linked (GlcNAc...) asparagine glycan is linked to Asn429.

In plasma, properdin exists as dimers, trimers or tetramers in the relative proportions of 26:54:20. Interacts with the pro-C3-convertase enzyme complex (C3b-Bb) comprised of Complement C3 beta chain (C3b) and the Complement factor B Bb fragment (Bb), where it binds (via its TSP type-1 5 domain) with C3b and Bb. This interaction stabilizes the complex and allows it to become the active C3-convertase enzyme complex (C3b-Bb-FP). Interacts with C3b. Interacts with CFB.

It localises to the secreted. In terms of biological role, a positive regulator of the alternate pathway of complement. It binds to and stabilizes the C3- and C5-convertase enzyme complexes. Inhibits CFI-CFH mediated degradation of Inhibits CFI-CFH mediated degradation of Complement C3 beta chain (C3b). In Cavia porcellus (Guinea pig), this protein is Properdin (CFP).